Consider the following 348-residue polypeptide: 3-isopropylmalate dehydrogenase (348 aa).

Position 76-87 (76-87) interacts with NAD(+); it reads GPKWTDPNNRPE. 4 residues coordinate substrate: Arg94, Arg104, Arg132, and Asp217. Positions 217, 241, and 245 each coordinate Mg(2+). 275–287 lines the NAD(+) pocket; the sequence is GSAPDIAGKNVAN.

The protein belongs to the isocitrate and isopropylmalate dehydrogenases family. LeuB type 1 subfamily. Homodimer. The cofactor is Mg(2+). Mn(2+) serves as cofactor.

It is found in the cytoplasm. It carries out the reaction (2R,3S)-3-isopropylmalate + NAD(+) = 4-methyl-2-oxopentanoate + CO2 + NADH. It participates in amino-acid biosynthesis; L-leucine biosynthesis; L-leucine from 3-methyl-2-oxobutanoate: step 3/4. Catalyzes the oxidation of 3-carboxy-2-hydroxy-4-methylpentanoate (3-isopropylmalate) to 3-carboxy-4-methyl-2-oxopentanoate. The product decarboxylates to 4-methyl-2 oxopentanoate. This Staphylococcus aureus (strain NCTC 8325 / PS 47) protein is 3-isopropylmalate dehydrogenase.